A 153-amino-acid chain; its full sequence is Ribosome maturation factor RimP (153 aa).

It belongs to the RimP family.

The protein resides in the cytoplasm. In terms of biological role, required for maturation of 30S ribosomal subunits. The chain is Ribosome maturation factor RimP from Clostridium tetani (strain Massachusetts / E88).